The chain runs to 477 residues: Cysteine--tRNA ligase (477 aa).

Position 34 (Cys34) interacts with Zn(2+). Positions 36–46 match the 'HIGH' region motif; it reads PTVYDFAHIGN. The Zn(2+) site is built by Cys235, His260, and Glu264. A 'KMSKS' region motif is present at residues 293 to 297; it reads KMSKS. Lys296 is a binding site for ATP.

Belongs to the class-I aminoacyl-tRNA synthetase family. As to quaternary structure, monomer. Requires Zn(2+) as cofactor.

Its subcellular location is the cytoplasm. It catalyses the reaction tRNA(Cys) + L-cysteine + ATP = L-cysteinyl-tRNA(Cys) + AMP + diphosphate. This Mesorhizobium japonicum (strain LMG 29417 / CECT 9101 / MAFF 303099) (Mesorhizobium loti (strain MAFF 303099)) protein is Cysteine--tRNA ligase.